Here is a 112-residue protein sequence, read N- to C-terminus: Colipase (112 aa).

Residues 1 to 17 (MEKVLALLLVTLTVAYA) form the signal peptide. The propeptide at 18–22 (VPDPR) is enterostatin, activation peptide. Disulfide bonds link Cys-34–Cys-45, Cys-40–Cys-56, Cys-44–Cys-78, Cys-66–Cys-86, and Cys-80–Cys-104.

Belongs to the colipase family. Forms a 1:1 stoichiometric complex with pancreatic lipase. In terms of tissue distribution, expressed by the pancreas.

The protein resides in the secreted. Its function is as follows. Colipase is a cofactor of pancreatic lipase. It allows the lipase to anchor itself to the lipid-water interface. Without colipase the enzyme is washed off by bile salts, which have an inhibitory effect on the lipase. In terms of biological role, enterostatin has a biological activity as a satiety signal. The polypeptide is Colipase (CLPS) (Sus scrofa (Pig)).